Reading from the N-terminus, the 316-residue chain is Apolipoprotein E (316 aa).

The signal sequence occupies residues 1–18 (MKVLWVALVITLLAGCQA). 8 consecutive repeat copies span residues 79-100 (VLMD…GQLG), 101-122 (PIAQ…ARLA), 123-144 (SDME…ALMG), 145-166 (QTTD…KRLL), 167-188 (RDAE…EGSE), 189-210 (RSVS…VRAA), 211-232 (TVGT…QKLR), and 233-254 (GRME…EQLE). Positions 79-254 (VLMDETMKEV…HLEEMREQLE (176 aa)) are 8 X 22 AA approximate tandem repeats. An LDL and other lipoprotein receptors binding region spans residues 157–167 (HLRKLRKRLLR). 161–164 (LRKR) is a binding site for heparin. A lipid-binding and lipoprotein association region spans residues 209 to 289 (AATVGTLASQ…SWFEPLVEDM (81 aa)). 228–235 (HQKLRGRM) contacts heparin. Positions 265 to 316 (SQMRLQAEAFQARLKSWFEPLVEDMQRQWAGLVEKVQLAMATGPTSAPIENN) are homooligomerization. A specificity for association with VLDL region spans residues 277 to 289 (RLKSWFEPLVEDM).

Belongs to the apolipoprotein A1/A4/E family. In terms of assembly, homotetramer. May interact with ABCA1; functionally associated with ABCA1 in the biogenesis of HDLs. May interact with APP/A4 amyloid-beta peptide; the interaction is extremely stable in vitro but its physiological significance is unclear. May interact with MAPT. May interact with MAP2. In the cerebrospinal fluid, interacts with secreted SORL1. Interacts with PMEL; this allows the loading of PMEL luminal fragment on ILVs to induce fibril nucleation. Post-translationally, APOE exists as multiple glycosylated and sialylated glycoforms within cells and in plasma. The extent of glycosylation and sialylation are tissue and context specific. Glycated in plasma VLDL. In terms of processing, phosphorylated by FAM20C in the extracellular medium.

Its subcellular location is the secreted. The protein resides in the extracellular space. The protein localises to the extracellular matrix. It localises to the extracellular vesicle. It is found in the endosome. Its subcellular location is the multivesicular body. Its function is as follows. APOE is an apolipoprotein, a protein associating with lipid particles, that mainly functions in lipoprotein-mediated lipid transport between organs via the plasma and interstitial fluids. APOE is a core component of plasma lipoproteins and is involved in their production, conversion and clearance. Apolipoproteins are amphipathic molecules that interact both with lipids of the lipoprotein particle core and the aqueous environment of the plasma. As such, APOE associates with chylomicrons, chylomicron remnants, very low density lipoproteins (VLDL) and intermediate density lipoproteins (IDL) but shows a preferential binding to high-density lipoproteins (HDL). It also binds a wide range of cellular receptors including the LDL receptor/LDLR and the very low-density lipoprotein receptor/VLDLR that mediate the cellular uptake of the APOE-containing lipoprotein particles. Finally, APOE also has a heparin-binding activity and binds heparan-sulfate proteoglycans on the surface of cells, a property that supports the capture and the receptor-mediated uptake of APOE-containing lipoproteins by cells. In Tursiops truncatus (Atlantic bottle-nosed dolphin), this protein is Apolipoprotein E (APOE).